The sequence spans 284 residues: L-ribulose-5-phosphate 3-epimerase UlaE (284 aa).

It belongs to the L-ribulose-5-phosphate 3-epimerase family.

The catalysed reaction is L-ribulose 5-phosphate = L-xylulose 5-phosphate. The protein operates within cofactor degradation; L-ascorbate degradation; D-xylulose 5-phosphate from L-ascorbate: step 3/4. Catalyzes the isomerization of L-xylulose-5-phosphate to L-ribulose-5-phosphate. Is involved in the anaerobic L-ascorbate utilization. The protein is L-ribulose-5-phosphate 3-epimerase UlaE of Shigella sonnei (strain Ss046).